The primary structure comprises 212 residues: Peptide methionine sulfoxide reductase MsrA (212 aa).

Over residues 1–14 (MSSIDKTQRITQSD) the composition is skewed to polar residues. Residues 1 to 21 (MSSIDKTQRITQSDALPGRST) are disordered. C52 is a catalytic residue.

It belongs to the MsrA Met sulfoxide reductase family.

It carries out the reaction L-methionyl-[protein] + [thioredoxin]-disulfide + H2O = L-methionyl-(S)-S-oxide-[protein] + [thioredoxin]-dithiol. The enzyme catalyses [thioredoxin]-disulfide + L-methionine + H2O = L-methionine (S)-S-oxide + [thioredoxin]-dithiol. Has an important function as a repair enzyme for proteins that have been inactivated by oxidation. Catalyzes the reversible oxidation-reduction of methionine sulfoxide in proteins to methionine. The sequence is that of Peptide methionine sulfoxide reductase MsrA from Pectobacterium carotovorum subsp. carotovorum (strain PC1).